Reading from the N-terminus, the 296-residue chain is Phosphoribosylaminoimidazole-succinocarboxamide synthase (296 aa).

This sequence belongs to the SAICAR synthetase family.

The catalysed reaction is 5-amino-1-(5-phospho-D-ribosyl)imidazole-4-carboxylate + L-aspartate + ATP = (2S)-2-[5-amino-1-(5-phospho-beta-D-ribosyl)imidazole-4-carboxamido]succinate + ADP + phosphate + 2 H(+). Its pathway is purine metabolism; IMP biosynthesis via de novo pathway; 5-amino-1-(5-phospho-D-ribosyl)imidazole-4-carboxamide from 5-amino-1-(5-phospho-D-ribosyl)imidazole-4-carboxylate: step 1/2. The polypeptide is Phosphoribosylaminoimidazole-succinocarboxamide synthase (Desulfotalea psychrophila (strain LSv54 / DSM 12343)).